A 188-amino-acid chain; its full sequence is Capsid protein (188 aa).

Positions 150 to 181 (RRRGGARASRSPRRRTPSPRRRRSQSPRRRRS) are enriched in basic residues. Residues 150–188 (RRRGGARASRSPRRRTPSPRRRRSQSPRRRRSQSPSANC) form a disordered region. A phosphoserine; by host mark is found at S160, S167, and S175. Residues 160–166 (SPRRRTP) form a 1; half-length repeat. Residues 160–182 (SPRRRTPSPRRRRSQSPRRRRSQ) are 3 X 8 AA repeats of S-P-R-R-R-[PR]-S-Q. The short motif at 163-180 (RRTPSPRRRRSQSPRRRR) is the Bipartite nuclear localization signal element. Repeat copies occupy residues 167 to 174 (SPRRRRSQ) and 175 to 182 (SPRRRRSQ). The segment at 182 to 188 (QSPSANC) is RNA binding.

Belongs to the orthohepadnavirus core antigen family. Homodimerizes, then multimerizes. Interacts with cytosol exposed regions of viral L glycoprotein present in the reticulum-to-Golgi compartment. Interacts with human FLNB. Phosphorylated form interacts with host importin alpha; this interaction depends on the exposure of the NLS, which itself depends upon genome maturation and/or phosphorylation of the capsid protein. Interacts with host NUP153. Phosphorylated by host SRPK1, SRPK2, and maybe protein kinase C or GAPDH. Phosphorylation is critical for pregenomic RNA packaging. Protein kinase C phosphorylation is stimulated by HBx protein and may play a role in transport of the viral genome to the nucleus at the late step during the viral replication cycle.

Its subcellular location is the virion. The protein resides in the host cytoplasm. Self assembles to form an icosahedral capsid. Most capsids appear to be large particles with an icosahedral symmetry of T=4 and consist of 240 copies of capsid protein, though a fraction forms smaller T=3 particles consisting of 180 capsid proteins. Entering capsids are transported along microtubules to the nucleus. Phosphorylation of the capsid is thought to induce exposure of nuclear localization signal in the C-terminal portion of the capsid protein that allows binding to the nuclear pore complex via the importin (karyopherin-) alpha and beta. Capsids are imported in intact form through the nuclear pore into the nuclear basket, where it probably binds NUP153. Only capsids that contain the mature viral genome can release the viral DNA and capsid protein into the nucleoplasm. Immature capsids get stuck in the basket. Capsids encapsulate the pre-genomic RNA and the P protein. Pre-genomic RNA is reverse-transcribed into DNA while the capsid is still in the cytoplasm. The capsid can then either be directed to the nucleus, providing more genomes for transcription, or bud through the endoplasmic reticulum to provide new virions. The chain is Capsid protein from Marmota monax (Woodchuck).